A 275-amino-acid chain; its full sequence is Endolytic peptidoglycan transglycosylase RlpA (275 aa).

The N-terminal stretch at 1-22 is a signal peptide; that stretch reads MQIKTITLKLSAVSLGALFFSG. The N-palmitoyl cysteine moiety is linked to residue Cys-23. Cys-23 carries S-diacylglycerol cysteine lipidation. In terms of domain architecture, SPOR spans 200–275; it reads IYEGGNFMVQ…AFAGAFVVRE (76 aa).

Belongs to the RlpA family.

The protein resides in the cell membrane. Its function is as follows. Lytic transglycosylase with a strong preference for naked glycan strands that lack stem peptides. The protein is Endolytic peptidoglycan transglycosylase RlpA of Campylobacter jejuni subsp. jejuni serotype O:2 (strain ATCC 700819 / NCTC 11168).